A 252-amino-acid chain; its full sequence is MSNAAAPATEGPDRSDAPAHVAIIMDGNGRWAAARGLPRAEGHRRGVEALRRVVRASHELGIRYLTIFSFSSENWSRPASEIGDLFGLLRRFIRNDLASLHRDGVKVRIIGERDGLESDICALLNEAEELTRDNSRLTLVVAFNYGSRQEIAKAAQKLAREVAEGRRDPATIDAETLGAHLDAPDIPDPDLIIRTSGEQRLSNFLMWQAAYSELVFVPIHWPDFDKAALEGAIAEFARRERRFGGLVAKTAS.

Asp-26 is a catalytic residue. Asp-26 contacts Mg(2+). Substrate-binding positions include 27 to 30, Trp-31, Arg-39, His-43, and 71 to 73; these read GNGR and SSE. Residue Asn-74 is the Proton acceptor of the active site. Substrate-binding positions include Trp-75, Arg-77, Arg-194, and 200 to 202; that span reads RLS. Glu-213 contributes to the Mg(2+) binding site.

The protein belongs to the UPP synthase family. As to quaternary structure, homodimer. Mg(2+) serves as cofactor.

Its function is as follows. Catalyzes the condensation of isopentenyl diphosphate (IPP) with allylic pyrophosphates generating different type of terpenoids. In Bradyrhizobium diazoefficiens (strain JCM 10833 / BCRC 13528 / IAM 13628 / NBRC 14792 / USDA 110), this protein is Isoprenyl transferase 2.